Here is a 389-residue protein sequence, read N- to C-terminus: S-adenosylmethionine synthase (389 aa).

Histidine 15 is a binding site for ATP. Aspartate 17 is a binding site for Mg(2+). Position 43 (glutamate 43) interacts with K(+). Glutamate 56 and glutamine 99 together coordinate L-methionine. The tract at residues 99–109 (QSPDIAQGVNE) is flexible loop. ATP-binding positions include 166–168 (DAK), 234–235 (RF), aspartate 243, 249–250 (RK), alanine 266, and lysine 270. Residue aspartate 243 coordinates L-methionine. Lysine 274 serves as a coordination point for L-methionine.

The protein belongs to the AdoMet synthase family. As to quaternary structure, homotetramer; dimer of dimers. Mg(2+) is required as a cofactor. K(+) serves as cofactor.

The protein localises to the cytoplasm. The enzyme catalyses L-methionine + ATP + H2O = S-adenosyl-L-methionine + phosphate + diphosphate. It functions in the pathway amino-acid biosynthesis; S-adenosyl-L-methionine biosynthesis; S-adenosyl-L-methionine from L-methionine: step 1/1. Functionally, catalyzes the formation of S-adenosylmethionine (AdoMet) from methionine and ATP. The overall synthetic reaction is composed of two sequential steps, AdoMet formation and the subsequent tripolyphosphate hydrolysis which occurs prior to release of AdoMet from the enzyme. The sequence is that of S-adenosylmethionine synthase from Chromobacterium violaceum (strain ATCC 12472 / DSM 30191 / JCM 1249 / CCUG 213 / NBRC 12614 / NCIMB 9131 / NCTC 9757 / MK).